The following is a 468-amino-acid chain: ATP synthase subunit beta (468 aa).

Gly-150 to Thr-157 is an ATP binding site.

This sequence belongs to the ATPase alpha/beta chains family. As to quaternary structure, F-type ATPases have 2 components, CF(1) - the catalytic core - and CF(0) - the membrane proton channel. CF(1) has five subunits: alpha(3), beta(3), gamma(1), delta(1), epsilon(1). CF(0) has three main subunits: a(1), b(2) and c(9-12). The alpha and beta chains form an alternating ring which encloses part of the gamma chain. CF(1) is attached to CF(0) by a central stalk formed by the gamma and epsilon chains, while a peripheral stalk is formed by the delta and b chains.

It is found in the cell inner membrane. It carries out the reaction ATP + H2O + 4 H(+)(in) = ADP + phosphate + 5 H(+)(out). Produces ATP from ADP in the presence of a proton gradient across the membrane. The catalytic sites are hosted primarily by the beta subunits. The polypeptide is ATP synthase subunit beta (Acidovorax ebreus (strain TPSY) (Diaphorobacter sp. (strain TPSY))).